The primary structure comprises 120 residues: Small ribosomal subunit protein uS19 (120 aa).

The protein belongs to the universal ribosomal protein uS19 family.

This is Small ribosomal subunit protein uS19 (RPS15) from Naegleria gruberi (Amoeba).